We begin with the raw amino-acid sequence, 246 residues long: 4-hydroxy-tetrahydrodipicolinate reductase (246 aa).

NAD(+) is bound by residues 7-12 (GATGRT), 84-86 (GTT), and 108-111 (ASNF). The active-site Proton donor/acceptor is the His140. His141 contributes to the (S)-2,3,4,5-tetrahydrodipicolinate binding site. The active-site Proton donor is Lys144. Residue 150–151 (GT) participates in (S)-2,3,4,5-tetrahydrodipicolinate binding.

Belongs to the DapB family.

It is found in the cytoplasm. The catalysed reaction is (S)-2,3,4,5-tetrahydrodipicolinate + NAD(+) + H2O = (2S,4S)-4-hydroxy-2,3,4,5-tetrahydrodipicolinate + NADH + H(+). It catalyses the reaction (S)-2,3,4,5-tetrahydrodipicolinate + NADP(+) + H2O = (2S,4S)-4-hydroxy-2,3,4,5-tetrahydrodipicolinate + NADPH + H(+). Its pathway is amino-acid biosynthesis; L-lysine biosynthesis via DAP pathway; (S)-tetrahydrodipicolinate from L-aspartate: step 4/4. Functionally, catalyzes the conversion of 4-hydroxy-tetrahydrodipicolinate (HTPA) to tetrahydrodipicolinate. The chain is 4-hydroxy-tetrahydrodipicolinate reductase from Natronomonas pharaonis (strain ATCC 35678 / DSM 2160 / CIP 103997 / JCM 8858 / NBRC 14720 / NCIMB 2260 / Gabara) (Halobacterium pharaonis).